Reading from the N-terminus, the 73-residue chain is Nodulin-1 (73 aa).

An N-terminal signal peptide occupies residues 1 to 23 (MERKTLASLCFFLIVLLAAQVVA). 3 cysteine pairs are disulfide-bonded: C39–C64, C49–C71, and C53–C73.

In terms of tissue distribution, expressed in nodules, but not in leaves, stems, flowers and roots. In developing nodules, expressed close to the infection threads.

The protein resides in the secreted. Functionally, nodulation-related protein probably involved in the infection process. This is Nodulin-1 (N1) from Medicago truncatula (Barrel medic).